Here is a 327-residue protein sequence, read N- to C-terminus: L-lactate dehydrogenase (327 aa).

Residues Val-18, Asp-39, Lys-44, Tyr-69, and 83–84 (GA) contribute to the NAD(+) site. Substrate-binding positions include Gln-86, Arg-92, and 124–127 (NPVD). Residues 122–124 (AAN) and Ser-147 contribute to the NAD(+) site. 152–155 (DSAR) lines the substrate pocket. Residues Arg-157 and His-172 each contribute to the beta-D-fructose 1,6-bisphosphate site. His-179 functions as the Proton acceptor in the catalytic mechanism. Tyr-224 is modified (phosphotyrosine). Residue Thr-233 participates in substrate binding.

This sequence belongs to the LDH/MDH superfamily. LDH family. Homotetramer.

It localises to the cytoplasm. The catalysed reaction is (S)-lactate + NAD(+) = pyruvate + NADH + H(+). It functions in the pathway fermentation; pyruvate fermentation to lactate; (S)-lactate from pyruvate: step 1/1. With respect to regulation, allosterically activated by fructose 1,6-bisphosphate (FBP). Functionally, catalyzes the conversion of lactate to pyruvate. This Streptococcus pyogenes serotype M3 (strain SSI-1) protein is L-lactate dehydrogenase.